The chain runs to 139 residues: Protein Turandot B (139 aa).

The N-terminal stretch at 1-21 is a signal peptide; sequence MNFNMSMICFALLLIVTLCSA.

Belongs to the Turandot family.

It localises to the secreted. A humoral factor that may play a role in stress tolerance. This Drosophila yakuba (Fruit fly) protein is Protein Turandot B.